The sequence spans 750 residues: Photosystem I P700 chlorophyll a apoprotein A1 (750 aa).

A run of 8 helical transmembrane segments spans residues 70–93, 156–179, 195–219, 291–309, 346–369, 385–411, 433–455, and 531–549; these read VFSAHFGQLSIIFLWLSGMYFHGA, LYCTAIGALVFAGLMLFAGWFHYH, LNHHLAGLLGLGSLSWAGHQVHVSL, IVHHHLAIAILFLIAGHMY, WHAQLSLNLAMLGSLTIVVAHHMY, LSLFTHHMWIGGFLIVGAAAHAAIFMV, AIISHLNWACIFLGFHSFGLYIH, and FLVHHIHAFTIHVTVLILL. Positions 573 and 582 each coordinate [4Fe-4S] cluster. 2 consecutive transmembrane segments (helical) span residues 589–610 and 664–686; these read HVFLGLFWMYNAISVVIFHFSW and LSAYGLFFLGAHFVWAFSLMFLF. H675 is a binding site for chlorophyll a'. The chlorophyll a site is built by M683 and Y691. Phylloquinone is bound at residue W692. A helical membrane pass occupies residues 724 to 744; that stretch reads AVGVTHYLLGGIATTWAFFLA.

The protein belongs to the PsaA/PsaB family. In terms of assembly, the PsaA/B heterodimer binds the P700 chlorophyll special pair and subsequent electron acceptors. PSI consists of a core antenna complex that captures photons, and an electron transfer chain that converts photonic excitation into a charge separation. The eukaryotic PSI reaction center is composed of at least 11 subunits. P700 is a chlorophyll a/chlorophyll a' dimer, A0 is one or more chlorophyll a, A1 is one or both phylloquinones and FX is a shared 4Fe-4S iron-sulfur center. is required as a cofactor.

It is found in the plastid. The protein localises to the chloroplast thylakoid membrane. The enzyme catalyses reduced [plastocyanin] + hnu + oxidized [2Fe-2S]-[ferredoxin] = oxidized [plastocyanin] + reduced [2Fe-2S]-[ferredoxin]. PsaA and PsaB bind P700, the primary electron donor of photosystem I (PSI), as well as the electron acceptors A0, A1 and FX. PSI is a plastocyanin-ferredoxin oxidoreductase, converting photonic excitation into a charge separation, which transfers an electron from the donor P700 chlorophyll pair to the spectroscopically characterized acceptors A0, A1, FX, FA and FB in turn. Oxidized P700 is reduced on the lumenal side of the thylakoid membrane by plastocyanin. In Piper cenocladum (Ant piper), this protein is Photosystem I P700 chlorophyll a apoprotein A1.